The primary structure comprises 215 residues: 3-isopropylmalate dehydratase small subunit (215 aa).

This sequence belongs to the LeuD family. LeuD type 1 subfamily. Heterodimer of LeuC and LeuD.

The enzyme catalyses (2R,3S)-3-isopropylmalate = (2S)-2-isopropylmalate. Its pathway is amino-acid biosynthesis; L-leucine biosynthesis; L-leucine from 3-methyl-2-oxobutanoate: step 2/4. Catalyzes the isomerization between 2-isopropylmalate and 3-isopropylmalate, via the formation of 2-isopropylmaleate. The sequence is that of 3-isopropylmalate dehydratase small subunit from Marinobacter nauticus (strain ATCC 700491 / DSM 11845 / VT8) (Marinobacter aquaeolei).